A 307-amino-acid polypeptide reads, in one-letter code: Ornithine carbamoyltransferase (307 aa).

Residues 56 to 59, Gln83, Arg107, and 134 to 137 each bind carbamoyl phosphate; these read STRT and HPCQ. L-ornithine contacts are provided by residues Asn165, Asp223, and 227 to 228; that span reads SM. Residues 263–264 and Arg291 contribute to the carbamoyl phosphate site; that span reads CL.

This sequence belongs to the aspartate/ornithine carbamoyltransferase superfamily. OTCase family.

It is found in the cytoplasm. It catalyses the reaction carbamoyl phosphate + L-ornithine = L-citrulline + phosphate + H(+). It functions in the pathway amino-acid degradation; L-arginine degradation via ADI pathway; carbamoyl phosphate from L-arginine: step 2/2. Its function is as follows. Reversibly catalyzes the transfer of the carbamoyl group from carbamoyl phosphate (CP) to the N(epsilon) atom of ornithine (ORN) to produce L-citrulline. This Cupriavidus taiwanensis (strain DSM 17343 / BCRC 17206 / CCUG 44338 / CIP 107171 / LMG 19424 / R1) (Ralstonia taiwanensis (strain LMG 19424)) protein is Ornithine carbamoyltransferase.